The chain runs to 103 residues: Large ribosomal subunit protein bL21 (103 aa).

The protein belongs to the bacterial ribosomal protein bL21 family. In terms of assembly, part of the 50S ribosomal subunit. Contacts protein L20.

In terms of biological role, this protein binds to 23S rRNA in the presence of protein L20. The sequence is that of Large ribosomal subunit protein bL21 from Borrelia garinii subsp. bavariensis (strain ATCC BAA-2496 / DSM 23469 / PBi) (Borreliella bavariensis).